A 72-amino-acid chain; its full sequence is SPbeta prophage-derived uncharacterized protein YorV (72 aa).

This is SPbeta prophage-derived uncharacterized protein YorV (yorV) from Bacillus subtilis (strain 168).